The chain runs to 20 residues: Flagellar filament 33 kDa core protein (20 aa).

It belongs to the bacterial flagellin family. The flagellum consists of an outer layer composed of repeating units of FlaA around a core that contains one or all of five antigenically related polypeptides.

The protein resides in the periplasmic flagellum. Its subcellular location is the periplasm. Component of the core of the flagella. The chain is Flagellar filament 33 kDa core protein from Spirochaeta aurantia.